The primary structure comprises 512 residues: Tyrosine-protein kinase Lyn (512 aa).

The disordered stretch occupies residues 1–62 (MGCIKSKGKD…GQRFQTKDPE (62 aa)). The N-myristoyl glycine moiety is linked to residue G2. The S-palmitoyl cysteine moiety is linked to residue C3. S11 and S13 each carry phosphoserine. The 61-residue stretch at 63–123 (EQGDIVVALY…PSNYVAKLNT (61 aa)) folds into the SH3 domain. An SH2 domain is found at 129-226 (WFFKDITRKD…GLCRRLEKAC (98 aa)). Y193 carries the phosphotyrosine modification. S228 is modified (phosphoserine). A Protein kinase domain is found at 247-501 (IKLVKRLGAG…YLQSVLDDFY (255 aa)). Residues 253–261 (LGAGQFGEV) and K275 contribute to the ATP site. Phosphotyrosine occurs at positions 306 and 316. The active-site Proton acceptor is the D367. Residue Y397 is modified to Phosphotyrosine; by autocatalysis. Phosphotyrosine is present on residues Y460 and Y473. Position 508 is a phosphotyrosine; by autocatalysis, CSK and MATK (Y508).

This sequence belongs to the protein kinase superfamily. Tyr protein kinase family. SRC subfamily. Interacts with TEC. Interacts (via SH2 domain) with FLT3 (tyrosine phosphorylated). Interacts with LIME1 and with CD79A upon activation of the B-cell antigen receptor. Interacts with the B-cell receptor complex. Interacts with phosphorylated THEMIS2. Interacts with EPOR. Interacts with MS4A2/FCER1B. Interaction (via the SH2 and SH3 domains) with MUC1 is stimulated by IL7 and the subsequent phosphorylation increases the binding between MUC1 and CTNNB1/beta-catenin. Interacts with ADAM15. Interacts with NDFIP2 and more weakly with NDFIP1. Interacts with FASLG. Interacts with KIT. Interacts with HCLS1. Interacts with FCGR2B. Interacts with FCGR1A; the interaction may be indirect. Interacts with CD19, CD22, CD79A and CD79B. Interacts (via SH3 domain) with CBLC, PPP1R15A and PDE4A. Interacts with TGFB1I1. Interacts (via SH3 domain) with PIK3R1, the regulatory subunit of phosphatidylinositol 3-kinase; this interaction enhances phosphatidylinositol 3-kinase activity. Interacts with CSF2RB, the common subunit of the IL3, IL5 and CSF2 receptors. Interacts with PAG1; identified in a complex with PAG1 and STAT3. Interacts with ABL1. Interacts with PTPN6/SHP-1. Interacts (via SH3 domain) with SCIMP (via proline-rich region). This interaction facilitates the phosphorylation of SCIMP on 'Tyr-107', which enhances binding of SCIMP to TLR4, and consequently the phosphorylation of TLR4 in response to stimulation by lipopolysaccharide in macrophages. Interacts with LPXN (via LD motif 3) and the interaction is induced upon B-cell antigen receptor (BCR) activation. Interacts (via SH3-domain) with ANKRD54 (via ankyrin repeat region) in an activation-independent status of LYN. Forms a multiprotein complex with ANKRD54 and HCLS1. Interacts (via SH2 and SH3 domains) with UNC119; leading to LYN activation. Interacts with CD36. Interacts with LYN. Interacts with SKAP1 and FYB1; this interaction promotes the phosphorylation of CLNK. Interacts with BCAR1/CAS and NEDD9/HEF1. As to quaternary structure, (Microbial infection) Interacts with Epstein-Barr virus LMP2A. In terms of assembly, (Microbial infection) Interacts with Herpes virus saimiri tyrosine kinase interacting protein (Tip). In terms of processing, ubiquitinated by CBL, leading to its degradation. Ubiquitination is SH3-dependent. Autophosphorylated. Phosphorylated on tyrosine residues in response to KIT signaling. Phosphorylation at Tyr-397 is required for optimal activity. Phosphorylation at Tyr-508 inhibits kinase activity. Phosphorylated at Tyr-508 by CSK. Dephosphorylated by PTPRC/CD45. Becomes rapidly phosphorylated upon activation of the B-cell receptor and the immunoglobulin receptor FCGR1A. Phosphorylated in response to ITGB1 in B-cells. As to expression, detected in monocytes (at protein level). Detected in placenta, and in fetal brain, lung, liver and kidney. Widely expressed in a variety of organs, tissues, and cell types such as epidermoid, hematopoietic, and neuronal cells. Expressed in primary neuroblastoma tumors.

It is found in the cell membrane. The protein resides in the nucleus. The protein localises to the cytoplasm. It localises to the perinuclear region. Its subcellular location is the golgi apparatus. It is found in the membrane. It catalyses the reaction L-tyrosyl-[protein] + ATP = O-phospho-L-tyrosyl-[protein] + ADP + H(+). With respect to regulation, subject to autoinhibition, mediated by intramolecular interactions between the SH2 domain and the C-terminal phosphotyrosine. Phosphorylation at Tyr-397 is required for optimal activity. Phosphorylated by CSK at Tyr-508; phosphorylation at Tyr-508 inhibits kinase activity. Kinase activity is modulated by dephosphorylation by PTPRC/CD45. Inhibited by Dasatinib, PP2, and SU6656. Functionally, non-receptor tyrosine-protein kinase that transmits signals from cell surface receptors and plays an important role in the regulation of innate and adaptive immune responses, hematopoiesis, responses to growth factors and cytokines, integrin signaling, but also responses to DNA damage and genotoxic agents. Functions primarily as negative regulator, but can also function as activator, depending on the context. Required for the initiation of the B-cell response, but also for its down-regulation and termination. Plays an important role in the regulation of B-cell differentiation, proliferation, survival and apoptosis, and is important for immune self-tolerance. Acts downstream of several immune receptors, including the B-cell receptor, CD79A, CD79B, CD5, CD19, CD22, FCER1, FCGR2, FCGR1A, TLR2 and TLR4. Plays a role in the inflammatory response to bacterial lipopolysaccharide. Mediates the responses to cytokines and growth factors in hematopoietic progenitors, platelets, erythrocytes, and in mature myeloid cells, such as dendritic cells, neutrophils and eosinophils. Acts downstream of EPOR, KIT, MPL, the chemokine receptor CXCR4, as well as the receptors for IL3, IL5 and CSF2. Plays an important role in integrin signaling. Regulates cell proliferation, survival, differentiation, migration, adhesion, degranulation, and cytokine release. Involved in the regulation of endothelial activation, neutrophil adhesion and transendothelial migration. Down-regulates signaling pathways by phosphorylation of immunoreceptor tyrosine-based inhibitory motifs (ITIM), that then serve as binding sites for phosphatases, such as PTPN6/SHP-1, PTPN11/SHP-2 and INPP5D/SHIP-1, that modulate signaling by dephosphorylation of kinases and their substrates. Phosphorylates LIME1 in response to CD22 activation. Phosphorylates BTK, CBL, CD5, CD19, CD72, CD79A, CD79B, CSF2RB, DOK1, HCLS1, LILRB3/PIR-B, MS4A2/FCER1B, SYK and TEC. Promotes phosphorylation of SIRPA, PTPN6/SHP-1, PTPN11/SHP-2 and INPP5D/SHIP-1. Mediates phosphorylation of the BCR-ABL fusion protein. Required for rapid phosphorylation of FER in response to FCER1 activation. Mediates KIT phosphorylation. Acts as an effector of EPOR (erythropoietin receptor) in controlling KIT expression and may play a role in erythroid differentiation during the switch between proliferation and maturation. Depending on the context, activates or inhibits several signaling cascades. Regulates phosphatidylinositol 3-kinase activity and AKT1 activation. Regulates activation of the MAP kinase signaling cascade, including activation of MAP2K1/MEK1, MAPK1/ERK2, MAPK3/ERK1, MAPK8/JNK1 and MAPK9/JNK2. Mediates activation of STAT5A and/or STAT5B. Phosphorylates LPXN on 'Tyr-72'. Kinase activity facilitates TLR4-TLR6 heterodimerization and signal initiation. Phosphorylates SCIMP on 'Tyr-107'; this enhances binding of SCIMP to TLR4, promoting the phosphorylation of TLR4, and a selective cytokine response to lipopolysaccharide in macrophages. Phosphorylates CLNK. Phosphorylates BCAR1/CAS and NEDD9/HEF1. This chain is Tyrosine-protein kinase Lyn (LYN), found in Homo sapiens (Human).